A 444-amino-acid polypeptide reads, in one-letter code: Transcription activator AFTR-2 (444 aa).

A DNA-binding region (zn(2)-C6 fungal-type) is located at residues 16–43; sequence CDFCTQSKLRCNKNKPSCRRCTLQQQPC. A disordered region spans residues 49-88; that stretch reads RRTGRPPKHPRKANDCQEANGQHGDQDPVTSTPGGSYQQQ. The segment covering 50-59 has biased composition (basic residues); it reads RTGRPPKHPR. The span at 76-88 shows a compositional bias: polar residues; that stretch reads PVTSTPGGSYQQQ.

The protein resides in the nucleus. Functionally, transcription factor that regulates the expression of the gene clusters that mediate the biosynthesis of the host-selective toxins (HSTs) AF-toxins responsible for Alternaria black spot of strawberry disease by the strawberry pathotype. On cellular level, AF-toxins affect plasma membrane of susceptible cells and cause a sudden increase in loss of K(+) after a few minutes of toxin treatment. The chain is Transcription activator AFTR-2 from Alternaria alternata (Alternaria rot fungus).